A 222-amino-acid polypeptide reads, in one-letter code: Protein-L-isoaspartate O-methyltransferase (222 aa).

S67 is an active-site residue.

Belongs to the methyltransferase superfamily. L-isoaspartyl/D-aspartyl protein methyltransferase family.

Its subcellular location is the cytoplasm. The enzyme catalyses [protein]-L-isoaspartate + S-adenosyl-L-methionine = [protein]-L-isoaspartate alpha-methyl ester + S-adenosyl-L-homocysteine. Its function is as follows. Catalyzes the methyl esterification of L-isoaspartyl residues in peptides and proteins that result from spontaneous decomposition of normal L-aspartyl and L-asparaginyl residues. It plays a role in the repair and/or degradation of damaged proteins. The chain is Protein-L-isoaspartate O-methyltransferase from Parvibaculum lavamentivorans (strain DS-1 / DSM 13023 / NCIMB 13966).